The sequence spans 276 residues: Hydroxyethylthiazole kinase (276 aa).

ATP-binding residues include arginine 126 and serine 172. Residue glycine 199 participates in substrate binding.

Belongs to the Thz kinase family. Requires Mg(2+) as cofactor.

It carries out the reaction 5-(2-hydroxyethyl)-4-methylthiazole + ATP = 4-methyl-5-(2-phosphooxyethyl)-thiazole + ADP + H(+). The protein operates within cofactor biosynthesis; thiamine diphosphate biosynthesis; 4-methyl-5-(2-phosphoethyl)-thiazole from 5-(2-hydroxyethyl)-4-methylthiazole: step 1/1. In terms of biological role, catalyzes the phosphorylation of the hydroxyl group of 4-methyl-5-beta-hydroxyethylthiazole (THZ). In Burkholderia pseudomallei (strain 1710b), this protein is Hydroxyethylthiazole kinase.